Here is an 851-residue protein sequence, read N- to C-terminus: Transcriptional regulator RFX1 (851 aa).

Polar residues-rich tracts occupy residues 1 to 11 and 20 to 34; these read MSSDQTPQNRN and PRLQ…STGP. Disordered regions lie at residues 1-121, 134-170, and 195-230; these read MSSD…EPHP, QSQF…PQTY, and HEAS…TGEN. A compositionally biased stretch (basic and acidic residues) spans 38-53; sequence QQRERSQEQESDHEHQ. The span at 54–84 shows a compositional bias: low complexity; that stretch reads QAQQHLHQFQQSNLTPSTTAFPSSTSIPTFS. Polar residues predominate over residues 85–114; it reads KQDQGYHNQFSSPQSSYRKIGNFAQSSNAP. Positions 141–170 are enriched in low complexity; sequence YSSPYIGQSQSQSQSQSQAQPQPHPQPQTY. Positions 199–211 are enriched in polar residues; sequence SADNDSATNITTP. The RFX-type winged-helix DNA-binding region spans 282-357; sequence GMVWLLNSCD…YHYCGIKLTG (76 aa). 2 disordered regions span residues 368–411 and 783–806; these read YQQK…SVSY and PPSL…TGTQ. Over residues 384–393 the composition is skewed to polar residues; that stretch reads AQVGSSTSSA. Low complexity predominate over residues 783 to 797; it reads PPSLSSLPQTQQQNP.

This sequence belongs to the RFX family.

The protein localises to the nucleus. In terms of biological role, transcription factor involved in DNA damage responses, morphogenesis, and virulence. The sequence is that of Transcriptional regulator RFX1 (RFX1) from Candida albicans (strain SC5314 / ATCC MYA-2876) (Yeast).